The chain runs to 347 residues: S-adenosylmethionine:tRNA ribosyltransferase-isomerase (347 aa).

It belongs to the QueA family. Monomer.

It is found in the cytoplasm. The catalysed reaction is 7-aminomethyl-7-carbaguanosine(34) in tRNA + S-adenosyl-L-methionine = epoxyqueuosine(34) in tRNA + adenine + L-methionine + 2 H(+). It functions in the pathway tRNA modification; tRNA-queuosine biosynthesis. In terms of biological role, transfers and isomerizes the ribose moiety from AdoMet to the 7-aminomethyl group of 7-deazaguanine (preQ1-tRNA) to give epoxyqueuosine (oQ-tRNA). The polypeptide is S-adenosylmethionine:tRNA ribosyltransferase-isomerase (Xylella fastidiosa (strain M12)).